The chain runs to 414 residues: Glucose-1-phosphate adenylyltransferase (414 aa).

Residues Tyr99, Gly164, Glu181–Lys182, and Ser199 each bind alpha-D-glucose 1-phosphate.

This sequence belongs to the bacterial/plant glucose-1-phosphate adenylyltransferase family. Homotetramer.

It carries out the reaction alpha-D-glucose 1-phosphate + ATP + H(+) = ADP-alpha-D-glucose + diphosphate. Its pathway is glycan biosynthesis; glycogen biosynthesis. Its function is as follows. Involved in the biosynthesis of ADP-glucose, a building block required for the elongation reactions to produce glycogen. Catalyzes the reaction between ATP and alpha-D-glucose 1-phosphate (G1P) to produce pyrophosphate and ADP-Glc. This Bifidobacterium adolescentis (strain ATCC 15703 / DSM 20083 / NCTC 11814 / E194a) protein is Glucose-1-phosphate adenylyltransferase.